Consider the following 181-residue polypeptide: RING-H2 finger protein ATL56 (181 aa).

The tract at residues 1 to 24 is disordered; that stretch reads MPPTNNYRISGEPPSTTPSHPPPK. Positions 15-24 are enriched in pro residues; sequence STTPSHPPPK. The helical transmembrane segment at 32-52 threads the bilayer; sequence LFLVGVIMFSIFFLFLVLIGI. The RING-type; atypical zinc finger occupies 110–152; that stretch reads CVVCFDGFRQGQWCRNLPGCGHVFHRKCVDTWLLKASTCPICR.

It belongs to the RING-type zinc finger family. ATL subfamily.

The protein resides in the membrane. It catalyses the reaction S-ubiquitinyl-[E2 ubiquitin-conjugating enzyme]-L-cysteine + [acceptor protein]-L-lysine = [E2 ubiquitin-conjugating enzyme]-L-cysteine + N(6)-ubiquitinyl-[acceptor protein]-L-lysine.. It functions in the pathway protein modification; protein ubiquitination. This is RING-H2 finger protein ATL56 (ATL56) from Arabidopsis thaliana (Mouse-ear cress).